The sequence spans 340 residues: Ras association domain-containing protein 1 (340 aa).

Residue Ser-2 is modified to N-acetylserine. Ser-2 is modified (phosphoserine). Residues 2-115 (SAEPELIELR…DLGWDSALER (114 aa)) form a mediates interaction with E4F1 region. The Phorbol-ester/DAG-type zinc-finger motif lies at 51–101 (GHRFQPAGPTTHTWCDLCGDFIWGVVRKGLQCAHCKFTCHYRCRALVCLDC). Low complexity predominate over residues 175–185 (SVPSSKKPPSL). Positions 175–196 (SVPSSKKPPSLQDARRGTGRST) are disordered. The Ras-associating domain maps to 194–288 (RSTAVKRRTS…LSFVLKENDS (95 aa)). Residues 290–337 (EVNWDAFSMPELHNFLRILQREEEEHLRQILQKYSRCRQKIQEALHAC) enclose the SARAH domain. The segment at 311–314 (EEEE) is MOAP1-binding.

In terms of assembly, interacts with MAP1S and XPA. Binds to the N-terminal of CDC20 during prometaphase. Binds to STK3/MST2 and STK4/MST1. Recruited to the TNFRSF1A and TNFRSF10A complexes in response to their respective cognate ligand, after internalization. Can self-associate. Part of a complex with MDM2, DAXX, RASSF1 and USP7. Interacts with MOAP1 and E4F1. Interacts with RSSF5 and probably associates with HRAS via a RSSF1 isoform A-RSSF5 heterodimer. Interacts (via C-terminus) with DAXX (via N-terminus); the interaction is independent of MDM2 and TP53. Interacts (via N-terminus) with MDM2 (via C-terminus); the interaction is independent of TP53. Interacts with RAB39A. Interacts with RAB39B; the interaction is weak. As to quaternary structure, interacts with ECM2. Interacts with RAB39B; the interaction is strong. Does not interact with RAB39A.

The protein resides in the cytoplasm. It is found in the cytoskeleton. Its subcellular location is the microtubule organizing center. It localises to the centrosome. The protein localises to the spindle. The protein resides in the spindle pole. It is found in the nucleus. Potential tumor suppressor. Required for death receptor-dependent apoptosis. Mediates activation of Mediates activation of STK3/MST2 and STK4/MST1 during Fas-induced apoptosis by preventing their dephosphorylation. When associated with MOAP1, promotes BAX conformational change and translocation to mitochondrial membranes in response to TNF and TNFSF10 stimulation. Isoform A interacts with CDC20, an activator of the anaphase-promoting complex, APC, resulting in the inhibition of APC activity and mitotic progression. Inhibits proliferation by negatively regulating cell cycle progression at the level of G1/S-phase transition by regulating accumulation of cyclin D1 protein. Isoform C has been shown not to perform these roles, no function has been identified for this isoform. Isoform A disrupts interactions among MDM2, DAXX and USP7, thus contributing to the efficient activation of TP53 by promoting MDM2 self-ubiquitination in cell-cycle checkpoint control in response to DNA damage. The protein is Ras association domain-containing protein 1 of Mus musculus (Mouse).